The following is a 475-amino-acid chain: Bifunctional protein HldE (475 aa).

Residues 1-321 form a ribokinase region; that stretch reads MADKIDISLY…RALHQITASH (321 aa). An ATP-binding site is contributed by 197–200; it reads NLKE. Asp266 is an active-site residue. The cytidylyltransferase stretch occupies residues 346-475; it reads MTNGCFDILH…TSRLVEKMLN (130 aa).

In the N-terminal section; belongs to the carbohydrate kinase PfkB family. This sequence in the C-terminal section; belongs to the cytidylyltransferase family. In terms of assembly, homodimer.

The enzyme catalyses D-glycero-beta-D-manno-heptose 7-phosphate + ATP = D-glycero-beta-D-manno-heptose 1,7-bisphosphate + ADP + H(+). It carries out the reaction D-glycero-beta-D-manno-heptose 1-phosphate + ATP + H(+) = ADP-D-glycero-beta-D-manno-heptose + diphosphate. It participates in nucleotide-sugar biosynthesis; ADP-L-glycero-beta-D-manno-heptose biosynthesis; ADP-L-glycero-beta-D-manno-heptose from D-glycero-beta-D-manno-heptose 7-phosphate: step 1/4. Its pathway is nucleotide-sugar biosynthesis; ADP-L-glycero-beta-D-manno-heptose biosynthesis; ADP-L-glycero-beta-D-manno-heptose from D-glycero-beta-D-manno-heptose 7-phosphate: step 3/4. In terms of biological role, catalyzes the phosphorylation of D-glycero-D-manno-heptose 7-phosphate at the C-1 position to selectively form D-glycero-beta-D-manno-heptose-1,7-bisphosphate. Its function is as follows. Catalyzes the ADP transfer from ATP to D-glycero-beta-D-manno-heptose 1-phosphate, yielding ADP-D-glycero-beta-D-manno-heptose. This Coxiella burnetii (strain RSA 331 / Henzerling II) protein is Bifunctional protein HldE.